Here is a 273-residue protein sequence, read N- to C-terminus: Shikimate dehydrogenase (NADP(+)) (273 aa).

Residues 15–17 (SKS) and threonine 62 contribute to the shikimate site. The Proton acceptor role is filled by lysine 66. Glutamate 78 is a binding site for NADP(+). Positions 87 and 103 each coordinate shikimate. NADP(+) contacts are provided by residues 127 to 131 (GAGGA), 150 to 155 (NRTQEK), and methionine 213. Tyrosine 215 provides a ligand contact to shikimate. Glycine 237 provides a ligand contact to NADP(+).

It belongs to the shikimate dehydrogenase family. Homodimer.

It carries out the reaction shikimate + NADP(+) = 3-dehydroshikimate + NADPH + H(+). Its pathway is metabolic intermediate biosynthesis; chorismate biosynthesis; chorismate from D-erythrose 4-phosphate and phosphoenolpyruvate: step 4/7. Functionally, involved in the biosynthesis of the chorismate, which leads to the biosynthesis of aromatic amino acids. Catalyzes the reversible NADPH linked reduction of 3-dehydroshikimate (DHSA) to yield shikimate (SA). The sequence is that of Shikimate dehydrogenase (NADP(+)) from Shewanella woodyi (strain ATCC 51908 / MS32).